Consider the following 261-residue polypeptide: Glucosamine-6-phosphate deaminase (261 aa).

D67 functions as the Proton acceptor; for enolization step in the catalytic mechanism. The active-site For ring-opening step is D136. The active-site Proton acceptor; for ring-opening step is H138. E143 serves as the catalytic For ring-opening step.

It belongs to the glucosamine/galactosamine-6-phosphate isomerase family. NagB subfamily.

It catalyses the reaction alpha-D-glucosamine 6-phosphate + H2O = beta-D-fructose 6-phosphate + NH4(+). It functions in the pathway amino-sugar metabolism; N-acetylneuraminate degradation; D-fructose 6-phosphate from N-acetylneuraminate: step 5/5. Functionally, catalyzes the reversible isomerization-deamination of glucosamine 6-phosphate (GlcN6P) to form fructose 6-phosphate (Fru6P) and ammonium ion. This Beutenbergia cavernae (strain ATCC BAA-8 / DSM 12333 / CCUG 43141 / JCM 11478 / NBRC 16432 / NCIMB 13614 / HKI 0122) protein is Glucosamine-6-phosphate deaminase.